A 121-amino-acid polypeptide reads, in one-letter code: Small ribosomal subunit protein uS13 (121 aa).

Positions H91–K121 are disordered. Residues A106–K121 show a composition bias toward basic residues.

This sequence belongs to the universal ribosomal protein uS13 family. Part of the 30S ribosomal subunit. Forms a loose heterodimer with protein S19. Forms two bridges to the 50S subunit in the 70S ribosome.

Functionally, located at the top of the head of the 30S subunit, it contacts several helices of the 16S rRNA. In the 70S ribosome it contacts the 23S rRNA (bridge B1a) and protein L5 of the 50S subunit (bridge B1b), connecting the 2 subunits; these bridges are implicated in subunit movement. Contacts the tRNAs in the A and P-sites. This is Small ribosomal subunit protein uS13 from Bacillus mycoides (strain KBAB4) (Bacillus weihenstephanensis).